A 474-amino-acid polypeptide reads, in one-letter code: Methylenetetrahydrofolate--tRNA-(uracil-5-)-methyltransferase TrmFO (474 aa).

Position 14–19 (14–19 (GGGLAG)) interacts with FAD.

It belongs to the MnmG family. TrmFO subfamily. FAD serves as cofactor.

The protein resides in the cytoplasm. The catalysed reaction is uridine(54) in tRNA + (6R)-5,10-methylene-5,6,7,8-tetrahydrofolate + NADH + H(+) = 5-methyluridine(54) in tRNA + (6S)-5,6,7,8-tetrahydrofolate + NAD(+). It carries out the reaction uridine(54) in tRNA + (6R)-5,10-methylene-5,6,7,8-tetrahydrofolate + NADPH + H(+) = 5-methyluridine(54) in tRNA + (6S)-5,6,7,8-tetrahydrofolate + NADP(+). Catalyzes the folate-dependent formation of 5-methyl-uridine at position 54 (M-5-U54) in all tRNAs. The polypeptide is Methylenetetrahydrofolate--tRNA-(uracil-5-)-methyltransferase TrmFO (Caulobacter vibrioides (strain ATCC 19089 / CIP 103742 / CB 15) (Caulobacter crescentus)).